The chain runs to 140 residues: Ubiquitin-like protein ATG12 (140 aa).

The tract at residues 1–50 (MAEEPQSVLQLPTSIAAGGEGLTDVSPETTTPEPPSSAAVSPGTEEPAGD) is disordered. Residues 25–42 (VSPETTTPEPPSSAAVSP) show a composition bias toward low complexity. Residue Gly-140 forms a Glycyl lysine isopeptide (Gly-Lys) (interchain with K-130 in ATG5) linkage.

The protein belongs to the ATG12 family. As to quaternary structure, forms a conjugate with ATG5. Part of the minor complex composed of 4 sets of ATG12-ATG5 and ATG16L1 (400 kDa); this complex interacts with ATG3 leading to disruption of ATG7 interaction and promotion of ATG8-like proteins lipidation. Forms an 800-kDa complex composed of ATG12-ATG5 and ATG16L2. Interacts with DHX58/RIG-1, IFIH1/MDA5 and MAVS/IPS-1 in monomeric form as well as in ATG12-ATG5 conjugate. The interaction with MAVS is further enhanced upon vesicular stomatitis virus (VSV) infection. Interacts with ATG3; this interaction is essential for phosphatidylethanolamine (PE)-conjugated ATG8-like proteins formation. Interacts with ATG7. Interacts with ATG10. The ATG12-ATG5 conjugate interacts with RAB33A; this interaction is bridged by ATG16L1 and promotes ATG12-ATG5-ATG16L1 complex recruitment to phagophores. Interacts with TECPR1. Interacts with SH3BGRL. The ATG12-ATG5 conjugate interacts with PDCD6IP (via the BRO1 domain); this interaction is bridged by ATG12 and promotes multiple PDCD6IP-mediated functions such as endolysosomal trafficking, macroautophagy and exosome biogenesis. Acetylated by EP300. Ubiquitous.

The protein localises to the cytoplasm. Its subcellular location is the preautophagosomal structure membrane. Functionally, ubiquitin-like protein involved in autophagy vesicles formation. Conjugation with ATG5 through a ubiquitin-like conjugating system involving also ATG7 as an E1-like activating enzyme and ATG10 as an E2-like conjugating enzyme, is essential for its function. The ATG12-ATG5 conjugate acts as an E3-like enzyme which is required for lipidation of ATG8 family proteins and their association to the vesicle membranes. As part of the ATG8 conjugation system with ATG5 and ATG16L1, required for recruitment of LRRK2 to stressed lysosomes and induction of LRRK2 kinase activity in response to lysosomal stress. Its function is as follows. (Microbial infection) May act as a proviral factor. In association with ATG5, negatively regulates the innate antiviral immune response by impairing the type I IFN production pathway upon vesicular stomatitis virus (VSV) infection. Required for the translation of incoming hepatitis C virus (HCV) RNA and, thereby, for the initiation of HCV replication, but not required once infection is established. The polypeptide is Ubiquitin-like protein ATG12 (Homo sapiens (Human)).